The primary structure comprises 776 residues: MKFYIEDLLVYFPYSYIYPEQYSYMVALKRSLDNGGPCILEMPSGTGKTVSLLSLISSYQVKNPSIKLIYCSRTVPEIEQATEEARRVLQYRNSEMGEESPKTLCMSMSSRRNLCIQPRVSEERDGKVVDALCRELTSSWNRESPTSEKCKFFENFESNGKEILLEGVYSLEDLKEYGLKHQMCPYFLSRHMLNFANIVIFSYQYLLDPKIASLISSSFPSNSIVVFDEAHNIDNVCINALSINIDNKLLDTSSKNIAKINKQIEDIKKVDEKRLKDEYQRLVNGLARSGSTRADETTSDPVLPNDVIQEAVPGNIRKAEHFISLLRRVVDYLKSRLKSQMLLSESPLAFLQGLYHATQISSRTLRFCSSRLSSLLRTLRINDVNQFSGISLIADFATLVGTYNNGFLIIIEPYYQRQNNTYDQIFQFCCLDASIGMKPIFDKYRSVVITSGTLSPLDIYTKMLNFRPTVVERLTMSLNRNCICPCILTRGSDQISISTKFDVRSDTAVVRNYGALLVEVSAIVPDGIICFFTSYSYMEQIVSVWNEMGLLNNILTNKLIFVETSDPAESALALQNYKKACDSGRGAVLLSVARGKVSEGIDFDNQYGRCVILYGIPYINTESKVLRARLEFLRDRYQIRENEFLTFDAMRTASQCVGRVIRGKSDYGIMIFADKRYNRLDKRNKLPQWILQFCQPQHLNLSTDMAISLSKTFLREMGQPFSREEQLGKSLWSLEHVEKQSTSKPPQQQNSAINSTITTSTTTTTTTSTISETHLT.

Residues 7-277 (DLLVYFPYSY…KKVDEKRLKD (271 aa)) form the Helicase ATP-binding domain. Residue 42–49 (MPSGTGKT) participates in ATP binding. Cysteine 115, cysteine 133, cysteine 150, and cysteine 184 together coordinate [4Fe-4S] cluster. A DEAH box motif is present at residues 228-231 (DEAH). The disordered stretch occupies residues 736-776 (HVEKQSTSKPPQQQNSAINSTITTSTTTTTTTSTISETHLT). Polar residues predominate over residues 742-754 (TSKPPQQQNSAIN). The span at 755 to 776 (STITTSTTTTTTTSTISETHLT) shows a compositional bias: low complexity.

Belongs to the helicase family. RAD3/XPD subfamily. In terms of assembly, component of the 7-subunit TFIIH core complex composed of XPB/repB, XPD/repD, gtf2h1, gtf2h2, gtf2h3, gtf2h4 and gtf2h5, which is active in NER. The core complex associates with the 3-subunit CDK-activating kinase (CAK) module composed of cycH/cyclin H, cdk7 and mnat1 to form the 10-subunit holoenzyme (holo-TFIIH) active in transcription. It depends on Mg(2+) as a cofactor. The cofactor is [4Fe-4S] cluster.

The protein resides in the nucleus. The enzyme catalyses Couples ATP hydrolysis with the unwinding of duplex DNA at the replication fork by translocating in the 5'-3' direction. This creates two antiparallel DNA single strands (ssDNA). The leading ssDNA polymer is the template for DNA polymerase III holoenzyme which synthesizes a continuous strand.. The catalysed reaction is ATP + H2O = ADP + phosphate + H(+). Functionally, ATP-dependent 5'-3' DNA helicase, component of the general transcription and DNA repair factor IIH (TFIIH) core complex, which is involved in general and transcription-coupled nucleotide excision repair (NER) of damaged DNA and, when complexed to CDK-activating kinase (CAK), in transcription by RNA polymerase II. In NER, TFIIH acts by opening DNA around the lesion to allow the excision of the damaged oligonucleotide and its replacement by a new DNA fragment. The ATP-dependent helicase activity of XPD/repD is required for DNA opening. In transcription, TFIIH has an essential role in transcription initiation. When the pre-initiation complex (PIC) has been established, TFIIH is required for promoter opening and promoter escape. Phosphorylation of the C-terminal tail (CTD) of the largest subunit of RNA polymerase II by the kinase module CAK controls the initiation of transcription. XPD/repD acts by forming a bridge between CAK and the core-TFIIH complex. The sequence is that of General transcription and DNA repair factor IIH helicase subunit XPD from Dictyostelium discoideum (Social amoeba).